A 185-amino-acid polypeptide reads, in one-letter code: Membrane glycoprotein US10 (185 aa).

The signal sequence occupies residues 1–24 (MLRRGSLRNPLAICLLWWLGVVAA). At 25–149 (ATEETREPTY…VLMNLTYLWY (125 aa)) the chain is on the lumenal side. The Ig-like H-type domain occupies 30–133 (REPTYFTCGC…YERFVCPVYD (104 aa)). C39 and C129 form a disulfide bridge. N-linked (GlcNAc...) asparagine; by host glycosylation is found at N111 and N143. Residues 150-170 (LGDYGAILKIYFGLFCGACVI) form a helical membrane-spanning segment. Over 171–185 (TRSLLLICGYYPPRE) the chain is Cytoplasmic.

The protein belongs to the HHV-5 US6 protein family.

The protein resides in the host endoplasmic reticulum membrane. Its function is as follows. Plays a role in the modulation of host immune response by down-regulating the surface presentation of HLA-G molecules. Selectively targets HLA-G molecules for degradation by a mechanism distinct from the one used by US11. The protein is Membrane glycoprotein US10 (US10) of Human cytomegalovirus (strain Merlin) (HHV-5).